We begin with the raw amino-acid sequence, 156 residues long: SsrA-binding protein (156 aa).

The tract at residues 134–156 (YDKRETLKRKEQDREMARALRKR) is disordered.

It belongs to the SmpB family.

It localises to the cytoplasm. In terms of biological role, required for rescue of stalled ribosomes mediated by trans-translation. Binds to transfer-messenger RNA (tmRNA), required for stable association of tmRNA with ribosomes. tmRNA and SmpB together mimic tRNA shape, replacing the anticodon stem-loop with SmpB. tmRNA is encoded by the ssrA gene; the 2 termini fold to resemble tRNA(Ala) and it encodes a 'tag peptide', a short internal open reading frame. During trans-translation Ala-aminoacylated tmRNA acts like a tRNA, entering the A-site of stalled ribosomes, displacing the stalled mRNA. The ribosome then switches to translate the ORF on the tmRNA; the nascent peptide is terminated with the 'tag peptide' encoded by the tmRNA and targeted for degradation. The ribosome is freed to recommence translation, which seems to be the essential function of trans-translation. The protein is SsrA-binding protein of Latilactobacillus sakei subsp. sakei (strain 23K) (Lactobacillus sakei subsp. sakei).